Here is a 345-residue protein sequence, read N- to C-terminus: MKIGIVGATGYGGTELVRILSHHPHAEECILYSSSGEGNVYSEGYPHLTGLADQQLKPIDMNTIKHEIDIMFLAAPPGVSSELTPKLADAGITVIDLSGDLRIKEPAEYEKWYKRTAAPKAVIQEAVYGLAELNQLQIQQAKLIANPGCFPTAVLLGLAPLAQKKLLDESFVIVDAKTGVSGAGRKASMGTHFSELNDNFKIYKVNEHQHTPEIEQALNEWQPGLGPITFSAHLVPMTRGIMATMYTRLTCDLTADDLHDLYSEFYQDSYFVRVRPKGQYPQTKEVYGSNFCDIAVTLDERTNRVTIVSVIDNLMKGAAGQAVQNFNLMNGWNEETGLTITPIYP.

Cys149 is a catalytic residue.

This sequence belongs to the NAGSA dehydrogenase family. Type 1 subfamily.

Its subcellular location is the cytoplasm. The enzyme catalyses N-acetyl-L-glutamate 5-semialdehyde + phosphate + NADP(+) = N-acetyl-L-glutamyl 5-phosphate + NADPH + H(+). It participates in amino-acid biosynthesis; L-arginine biosynthesis; N(2)-acetyl-L-ornithine from L-glutamate: step 3/4. Functionally, catalyzes the NADPH-dependent reduction of N-acetyl-5-glutamyl phosphate to yield N-acetyl-L-glutamate 5-semialdehyde. This chain is N-acetyl-gamma-glutamyl-phosphate reductase, found in Bacillus subtilis (strain 168).